Consider the following 449-residue polypeptide: Glycosyl hydrolase-like protein 1 (449 aa).

A beta-D-glucoside contacts are provided by residues Q22, H119, N164–E165, Y292, E350, W393, and Y406. E165 functions as the Proton donor in the catalytic mechanism. The active-site Nucleophile is E350.

The protein belongs to the glycosyl hydrolase 1 family. In terms of tissue distribution, mainly expressed in flowers, flower buds and young leaves, and, to a lesser extent, in old leaves, stems and roots.

The protein resides in the cytoplasm. The protein operates within secondary metabolite biosynthesis; terpenoid biosynthesis. Its function is as follows. Component of the oleanane-type triterpene saponins (e.g. saponarioside A and saponarioside B) biosynthetic pathway, leading to the production of natural products with detergent properties used as traditional sources of soap. Beta-glycosidase that catalyzes the transfer of glucose moiety to QA-triFRXX to produce QA-triF(Q)RXX via the elongation of the C-28 sugar chain with a D-quinovose. The polypeptide is Glycosyl hydrolase-like protein 1 (Saponaria officinalis (Common soapwort)).